We begin with the raw amino-acid sequence, 402 residues long: mRNA-capping enzyme subunit alpha (402 aa).

Residue K67 is the N6-GMP-lysine intermediate of the active site. The segment at S374–I402 is disordered.

This sequence belongs to the eukaryotic GTase family. In terms of assembly, heterodimer. The mRNA-capping enzyme is composed of two separate chains alpha and beta, respectively a mRNA guanylyltransferase and an mRNA 5'-triphosphate monophosphatase.

It localises to the nucleus. It catalyses the reaction a 5'-end diphospho-ribonucleoside in mRNA + GTP + H(+) = a 5'-end (5'-triphosphoguanosine)-ribonucleoside in mRNA + diphosphate. In terms of biological role, second step of mRNA capping. Transfer of the GMP moiety of GTP to the 5'-end of RNA via an enzyme-GMP covalent reaction intermediate. The protein is mRNA-capping enzyme subunit alpha (ceg1) of Schizosaccharomyces pombe (strain 972 / ATCC 24843) (Fission yeast).